Consider the following 605-residue polypeptide: Elongation factor 4 (605 aa).

The region spanning 11–193 (EKIRNFSIIA…QIVEKVPAPT (183 aa)) is the tr-type G domain. GTP is bound by residues 23-28 (DHGKST) and 140-143 (NKID).

The protein belongs to the TRAFAC class translation factor GTPase superfamily. Classic translation factor GTPase family. LepA subfamily.

Its subcellular location is the cell membrane. The enzyme catalyses GTP + H2O = GDP + phosphate + H(+). In terms of biological role, required for accurate and efficient protein synthesis under certain stress conditions. May act as a fidelity factor of the translation reaction, by catalyzing a one-codon backward translocation of tRNAs on improperly translocated ribosomes. Back-translocation proceeds from a post-translocation (POST) complex to a pre-translocation (PRE) complex, thus giving elongation factor G a second chance to translocate the tRNAs correctly. Binds to ribosomes in a GTP-dependent manner. This Streptococcus pyogenes serotype M4 (strain MGAS10750) protein is Elongation factor 4.